A 195-amino-acid polypeptide reads, in one-letter code: U8 snoRNA-decapping enzyme (195 aa).

In terms of domain architecture, Nudix hydrolase spans 18–168; sequence GWRHACHAML…LENTFIGNAR (151 aa). Positions 24, 50, and 57 each coordinate substrate. Positions 59, 76, 80, and 99 each coordinate Mn(2+). The Nudix box signature appears at 61 to 82; the sequence is FVDLRDGSLEDGLNRELGEELG. Residues N166 and Q170 each contribute to the substrate site. Residue E173 participates in Mn(2+) binding.

It belongs to the Nudix hydrolase family. NUDT16 subfamily. Homodimer. The cofactor is Mg(2+). Requires Mn(2+) as cofactor. It depends on Co(2+) as a cofactor.

It localises to the nucleus. Its subcellular location is the nucleolus. The protein localises to the nucleoplasm. It is found in the cytoplasm. The enzyme catalyses a 5'-end (N(7)-methyl 5'-triphosphoguanosine)-ribonucleoside in mRNA + H2O = N(7)-methyl-GDP + a 5'-end phospho-ribonucleoside in mRNA + 2 H(+). It carries out the reaction IDP + H2O = IMP + phosphate + H(+). It catalyses the reaction dIDP + H2O = dIMP + phosphate + H(+). The catalysed reaction is a 5'-end NAD(+)-phospho-ribonucleoside in mRNA + H2O = a 5'-end phospho-ribonucleoside in mRNA + NAD(+) + H(+). The enzyme catalyses a 5'-end FAD-phospho-ribonucleoside in mRNA + H2O = a 5'-end phospho-adenosine-phospho-ribonucleoside in mRNA + FMN + 2 H(+). It carries out the reaction a 5'-end CoA-ribonucleoside in mRNA + H2O = a 5'-end phospho-adenosine-phospho-ribonucleoside in mRNA + (R)-4'-phosphopantetheine + 2 H(+). RNA-binding and decapping enzyme that catalyzes the cleavage of the cap structure of snoRNAs and mRNAs in a metal-dependent manner. Part of the U8 snoRNP complex that is required for the accumulation of mature 5.8S and 28S rRNA. Has diphosphatase activity and removes m7G and/or m227G caps from U8 snoRNA and leaves a 5'monophosphate on the RNA. Also catalyzes the cleavage of the cap structure on mRNAs. Does not hydrolyze cap analog structures like 7-methylguanosine nucleoside triphosphate (m7GpppG). Also hydrolysis m7G- and m227G U3-capped RNAs but with less efficiencies. Has broad substrate specificity with manganese or cobalt as cofactor and can act on various RNA species. Binds to the U8 snoRNA; metal is not required for RNA-binding. May play a role in the regulation of snoRNAs and mRNAs degradation. Also acts as a phosphatase; hydrolyzes the non-canonical purine nucleotides inosine diphosphate (IDP) and deoxyinosine diphosphate (dITP) as well as guanosine diphosphate (GDP), deoxyguanosine diphosphate (dGDP), xanthine diphosphate (XDP), inosine triphosphate (ITP) and deoxyinosine triphosphate (ITP) to their respective monophosphate derivatives and does not distinguish between the deoxy- and ribose forms. The order of activity with different substrates is IDP &gt; dIDP &gt;&gt; GDP = dGDP &gt; XDP = ITP = dITP. Binds strongly to GTP, ITP and XTP. Participates in the hydrolysis of dIDP/IDP and probably excludes non-canonical purines from RNA and DNA precursor pools, thus preventing their incorporation into RNA and DNA and avoiding chromosomal lesions. Exhibits decapping activity towards NAD-capped RNAs and FAD-capped RNAs. Exhibits decapping activity towards dpCoA-capped RNAs in vitro. The sequence is that of U8 snoRNA-decapping enzyme (NUDT16) from Ovis aries (Sheep).